A 295-amino-acid polypeptide reads, in one-letter code: Ethanolamine ammonia-lyase small subunit (295 aa).

Adenosylcob(III)alamin-binding residues include Val207, Glu228, and Cys258.

It belongs to the EutC family. The basic unit is a heterodimer which dimerizes to form tetramers. The heterotetramers trimerize; 6 large subunits form a core ring with 6 small subunits projecting outwards. The cofactor is adenosylcob(III)alamin.

Its subcellular location is the bacterial microcompartment. The catalysed reaction is ethanolamine = acetaldehyde + NH4(+). The protein operates within amine and polyamine degradation; ethanolamine degradation. Catalyzes the deamination of various vicinal amino-alcohols to oxo compounds. Allows this organism to utilize ethanolamine as the sole source of nitrogen and carbon in the presence of external vitamin B12. This chain is Ethanolamine ammonia-lyase small subunit, found in Escherichia coli O7:K1 (strain IAI39 / ExPEC).